A 193-amino-acid chain; its full sequence is Protein GrpE (193 aa).

A disordered region spans residues 1–26; that stretch reads MTKKHHKEQEEIQETIKTEAAEENVG. The segment covering 7–20 has biased composition (basic and acidic residues); it reads KEQEEIQETIKTEA.

It belongs to the GrpE family. Homodimer.

It localises to the cytoplasm. Its function is as follows. Participates actively in the response to hyperosmotic and heat shock by preventing the aggregation of stress-denatured proteins, in association with DnaK and GrpE. It is the nucleotide exchange factor for DnaK and may function as a thermosensor. Unfolded proteins bind initially to DnaJ; upon interaction with the DnaJ-bound protein, DnaK hydrolyzes its bound ATP, resulting in the formation of a stable complex. GrpE releases ADP from DnaK; ATP binding to DnaK triggers the release of the substrate protein, thus completing the reaction cycle. Several rounds of ATP-dependent interactions between DnaJ, DnaK and GrpE are required for fully efficient folding. This is Protein GrpE from Chlorobaculum parvum (strain DSM 263 / NCIMB 8327) (Chlorobium vibrioforme subsp. thiosulfatophilum).